Reading from the N-terminus, the 291-residue chain is Formamidopyrimidine-DNA glycosylase (291 aa).

Catalysis depends on proline 2, which acts as the Schiff-base intermediate with DNA. Residue glutamate 3 is the Proton donor of the active site. The active-site Proton donor; for beta-elimination activity is lysine 58. The DNA site is built by histidine 104, arginine 123, and lysine 166. Residues 257 to 291 form an FPG-type zinc finger; it reads KVYDREGEPCPTCGGTVQRFVQNGRSTFWCPKCQK. Catalysis depends on arginine 281, which acts as the Proton donor; for delta-elimination activity.

Belongs to the FPG family. In terms of assembly, monomer. Zn(2+) is required as a cofactor.

The catalysed reaction is Hydrolysis of DNA containing ring-opened 7-methylguanine residues, releasing 2,6-diamino-4-hydroxy-5-(N-methyl)formamidopyrimidine.. It catalyses the reaction 2'-deoxyribonucleotide-(2'-deoxyribose 5'-phosphate)-2'-deoxyribonucleotide-DNA = a 3'-end 2'-deoxyribonucleotide-(2,3-dehydro-2,3-deoxyribose 5'-phosphate)-DNA + a 5'-end 5'-phospho-2'-deoxyribonucleoside-DNA + H(+). Functionally, involved in base excision repair of DNA damaged by oxidation or by mutagenic agents. Acts as a DNA glycosylase that recognizes and removes damaged bases. Has a preference for oxidized purines, such as 7,8-dihydro-8-oxoguanine (8-oxoG). Has AP (apurinic/apyrimidinic) lyase activity and introduces nicks in the DNA strand. Cleaves the DNA backbone by beta-delta elimination to generate a single-strand break at the site of the removed base with both 3'- and 5'-phosphates. This chain is Formamidopyrimidine-DNA glycosylase, found in Rhodopseudomonas palustris (strain ATCC BAA-98 / CGA009).